The chain runs to 543 residues: MESLLRQLSICNELIAQGSCTAGHIDWLNDFCATFLDFASELKAHLPEVAPRWPAEGGTNIDVETIFLCLTQVVTCITQLERTINIEGASARATPMTRLHFLDRIDWCVRRIIFCLSQLHLQRANDQSNSLEDHTFVELMDLALDHLEAFMETLANTTPTNLLCIVEENELQLGSIVNHIVRHALAFANVALEADKKALSELCETLLSECATFLEDSGELNPGHRKLEGLSLERALYGLETYLNEALLHLIFACIVELENTPISKLRHAPDSEFTEQLVLDFDTNMDRIQQIGVLAIAFSQDIKTKTIVRSCLASLESLDACIVPALQSSALHPHHADILEHHFNEEILIFRNLIHEIIDSRSLINNYLDMLAESIHLAVKRPPRDHLLIVQMGSVLEEHFRLPVNYSELSQLDGKRLHTDFMLILSECLAVVSSPLGEPKRIVKRLKILYSVLAKLRHAIDRNKYVHEDSSASVPNVSSRRQFTNATRTLLRMKSKSKRQRSFVRQRRDCLVPNPQNCSISNSISHQGDLISFQLTEILRIN.

Its subcellular location is the cytoplasm. The protein localises to the cell membrane. In terms of biological role, required for the cellularization of the syncytial blastoderm embryo. Involved in the localization of the actin filaments just prior to and during plasma membrane invagination. Sry-alpha together with nullo and bnk may provide auxiliary functions, by acting both to stabilize a large and dynamic microfilament structure and regulate its functions. The protein is Serendipity locus protein alpha (Sry-alpha) of Drosophila subobscura (Fruit fly).